We begin with the raw amino-acid sequence, 865 residues long: Probable beta-glucosidase J (865 aa).

Asp-233 is an active-site residue. 4 N-linked (GlcNAc...) asparagine glycosylation sites follow: Asn-330, Asn-447, Asn-503, and Asn-764. Residues 411–579 (TGQPGYTFRV…DTDTAIQQAV (169 aa)) form the PA14 domain.

The protein belongs to the glycosyl hydrolase 3 family.

The protein localises to the secreted. The catalysed reaction is Hydrolysis of terminal, non-reducing beta-D-glucosyl residues with release of beta-D-glucose.. It participates in glycan metabolism; cellulose degradation. Beta-glucosidases are one of a number of cellulolytic enzymes involved in the degradation of cellulosic biomass. Catalyzes the last step releasing glucose from the inhibitory cellobiose. The sequence is that of Probable beta-glucosidase J (bglJ) from Aspergillus fumigatus (strain CBS 144.89 / FGSC A1163 / CEA10) (Neosartorya fumigata).